The primary structure comprises 506 residues: Carboxyl-terminal PDZ ligand of neuronal nitric oxide synthase protein (506 aa).

A PID domain is found at 26–196 (FQHGICFEAK…ESERNSNSSG (171 aa)). 2 disordered regions span residues 175-224 (HTQQ…VEVP) and 241-260 (DAVGKEGGSHTGSKVSHPQE). A phosphoserine mark is found at serine 188, serine 192, and serine 195. A compositionally biased stretch (low complexity) spans 203-213 (TGAERASTATA). Serine 266 carries the phosphoserine modification. A coiled-coil region spans residues 322–363 (AAEAAARLEAQARVHQLLLQNKDMLQHISLLVKQVQELELKL). 4 positions are modified to phosphoserine: serine 371, serine 374, serine 401, and serine 417. The tract at residues 494–506 (QELGDGLDDEIAV) is interaction with NOS1. Positions 504–506 (IAV) match the PDZ-binding motif.

In terms of assembly, interacts with the PDZ domain of NOS1 or the second PDZ domain of DLG4 through its C-terminus. Interacts with RASD1 and SYN1, SYN2 and SYN3 via its PID domain. Forms a ternary complex with NOS1 and RASD1. Forms a ternary complex with NOS1 and SYN1. In terms of tissue distribution, expressed in kidney glomeruli podocytes.

The protein localises to the cell projection. It localises to the filopodium. The protein resides in the podosome. In terms of biological role, adapter protein involved in neuronal nitric-oxide (NO) synthesis regulation via its association with nNOS/NOS1. The complex formed with NOS1 and synapsins is necessary for specific NO and synapsin functions at a presynaptic level. Mediates an indirect interaction between NOS1 and RASD1 leading to enhance the ability of NOS1 to activate RASD1. Competes with DLG4 for interaction with NOS1, possibly affecting NOS1 activity by regulating the interaction between NOS1 and DLG4. In kidney podocytes, plays a role in podosomes and filopodia formation through CDC42 activation. The protein is Carboxyl-terminal PDZ ligand of neuronal nitric oxide synthase protein of Homo sapiens (Human).